We begin with the raw amino-acid sequence, 130 residues long: Guanyl-specific ribonuclease T1 (130 aa).

Residues 1-26 form the signal peptide; that stretch reads MMYSKLLTLTTLLLPTALALPSLVER. 2 disulfides stabilise this stretch: C28–C36 and C32–C129. H66 is a catalytic residue. E84 (proton acceptor) is an active-site residue. H118 functions as the Proton donor in the catalytic mechanism.

Belongs to the ribonuclease N1/T1 family. Monomer.

It catalyses the reaction [RNA] containing guanosine + H2O = an [RNA fragment]-3'-guanosine-3'-phosphate + a 5'-hydroxy-ribonucleotide-3'-[RNA fragment].. The protein is Guanyl-specific ribonuclease T1 (rntA) of Aspergillus oryzae (strain ATCC 42149 / RIB 40) (Yellow koji mold).